A 546-amino-acid chain; its full sequence is Alpha-taxilin (546 aa).

Disordered stretches follow at residues 1 to 170 and 482 to 546; these read MKNQ…GLGK and NKRV…SARA. The segment covering 11–21 has biased composition (polar residues); the sequence is AKQSNPKSSPG. Basic and acidic residues-rich tracts occupy residues 70–80 and 143–158; these read DVSEELSRQLE and EEIR…DHRR. Residue Ser-72 is modified to Phosphoserine. A coiled-coil region spans residues 186–491; it reads EEKLAALCKK…NKRVQDLSAG (306 aa). Ser-515 carries the phosphoserine modification. Residues 530-546 show a composition bias toward polar residues; it reads TEASGQTGPQEPTSARA.

This sequence belongs to the taxilin family. Binds to the C-terminal coiled coil region of syntaxin family members STX1A, STX3A and STX4A, but not when these proteins are complexed with SNAP25, VAMP2 or STXBP1, suggesting that it interacts with syntaxins that do not form the SNARE complex. Ubiquitous, with much higher expression in heart, kidney, liver and pancreas.

In terms of biological role, may be involved in intracellular vesicle traffic and potentially in calcium-dependent exocytosis in neuroendocrine cells. This chain is Alpha-taxilin (TXLNA), found in Homo sapiens (Human).